We begin with the raw amino-acid sequence, 140 residues long: Profilin (140 aa).

The protein belongs to the profilin family. As to quaternary structure, occurs in many kinds of cells as a complex with monomeric actin in a 1:1 ratio.

Functionally, binds to actin and affects the structure of the cytoskeleton. At high concentrations, profilin prevents the polymerization of actin, whereas it enhances it at low concentrations. By binding to PIP2, it inhibits the formation of IP3 and DG. The protein is Profilin of Suberites domuncula (Sponge).